A 265-amino-acid polypeptide reads, in one-letter code: 3-deoxy-manno-octulosonate cytidylyltransferase 2 (265 aa).

It belongs to the KdsB family.

It is found in the cytoplasm. It carries out the reaction 3-deoxy-alpha-D-manno-oct-2-ulosonate + CTP = CMP-3-deoxy-beta-D-manno-octulosonate + diphosphate. It participates in nucleotide-sugar biosynthesis; CMP-3-deoxy-D-manno-octulosonate biosynthesis; CMP-3-deoxy-D-manno-octulosonate from 3-deoxy-D-manno-octulosonate and CTP: step 1/1. The protein operates within bacterial outer membrane biogenesis; lipopolysaccharide biosynthesis. Functionally, activates KDO (a required 8-carbon sugar) for incorporation into bacterial lipopolysaccharide in Gram-negative bacteria. This chain is 3-deoxy-manno-octulosonate cytidylyltransferase 2, found in Burkholderia lata (strain ATCC 17760 / DSM 23089 / LMG 22485 / NCIMB 9086 / R18194 / 383).